The sequence spans 392 residues: Bifunctional enzyme Fae/Hps (392 aa).

The segment at 1–161 (MFQIGEALMG…EESNKSTHAI (161 aa)) is formaldehyde-activating enzyme. Histidine 17 acts as the Proton donor in catalysis. Substrate contacts are provided by aspartate 19, leucine 48, lysine 66, threonine 68, and glutamine 83. A 3-hexulose-6-phosphate synthase region spans residues 162-392 (MGFKVTRLWD…IDQFRVMTDF (231 aa)).

This sequence in the N-terminal section; belongs to the formaldehyde-activating enzyme family. The protein in the C-terminal section; belongs to the HPS/KGPDC family. HPS subfamily.

The enzyme catalyses 5,6,7,8-tetrahydromethanopterin + formaldehyde = 5,10-methylenetetrahydromethanopterin + H2O. It carries out the reaction D-ribulose 5-phosphate + formaldehyde = D-arabino-hex-3-ulose 6-phosphate. It participates in carbohydrate biosynthesis; D-ribose 5-phosphate biosynthesis. In terms of biological role, catalyzes the condensation of formaldehyde with tetrahydromethanopterin (H(4)MPT) to 5,10-methylenetetrahydromethanopterin. Catalyzes the reversible formation of ribulose-5-phosphate and formaldehyde from 3-hexulose-6-phosphate. This chain is Bifunctional enzyme Fae/Hps, found in Methanosarcina barkeri (strain Fusaro / DSM 804).